A 333-amino-acid chain; its full sequence is GTPase Obg (333 aa).

An Obg domain is found at Met1–Leu159. The tract at residues Lys63–Asp85 is disordered. Residues Gly75 to Asp84 are compositionally biased toward basic and acidic residues. The region spanning Ala160 to Cys329 is the OBG-type G domain. GTP contacts are provided by residues Gly166 to Ser173, Phe191 to Ser195, Asp213 to Gly216, Asn283 to Asp286, and Ser310 to Ala312. Positions 173 and 193 each coordinate Mg(2+).

This sequence belongs to the TRAFAC class OBG-HflX-like GTPase superfamily. OBG GTPase family. As to quaternary structure, monomer. It depends on Mg(2+) as a cofactor.

The protein localises to the cytoplasm. Its function is as follows. An essential GTPase which binds GTP, GDP and possibly (p)ppGpp with moderate affinity, with high nucleotide exchange rates and a fairly low GTP hydrolysis rate. Plays a role in control of the cell cycle, stress response, ribosome biogenesis and in those bacteria that undergo differentiation, in morphogenesis control. The chain is GTPase Obg from Desulfosudis oleivorans (strain DSM 6200 / JCM 39069 / Hxd3) (Desulfococcus oleovorans).